Consider the following 83-residue polypeptide: Pigment-dispersing hormone peptides (83 aa).

Residues 1 to 24 form the signal peptide; the sequence is MRFIILGVLFIAVASMILSNGVMA. Residue A80 is modified to Alanine amide.

Belongs to the arthropod PDH family. Strongly expressed in eyestalk tissue and cerebral ganglia (at protein level).

It localises to the secreted. In terms of biological role, the pigment-dispersing hormone causes the migration of the distal retinal pigment into the proximal end of the pigment chromatophore cells and thus decreases the amount of light entering the retinulas. May also function as a neurotransmitter and/or neuromodulator. In Eurydice pulchra (Speckled sea louse), this protein is Pigment-dispersing hormone peptides.